Consider the following 176-residue polypeptide: Ribosome maturation factor RimM (176 aa).

A PRC barrel domain is found at 97–176 (EDEFYWRDLI…QILVDWDPDF (80 aa)).

The protein belongs to the RimM family. In terms of assembly, binds ribosomal protein uS19.

Its subcellular location is the cytoplasm. Its function is as follows. An accessory protein needed during the final step in the assembly of 30S ribosomal subunit, possibly for assembly of the head region. Essential for efficient processing of 16S rRNA. May be needed both before and after RbfA during the maturation of 16S rRNA. It has affinity for free ribosomal 30S subunits but not for 70S ribosomes. This Shewanella sp. (strain ANA-3) protein is Ribosome maturation factor RimM.